Here is a 651-residue protein sequence, read N- to C-terminus: Mediator of RNA polymerase II transcription subunit 17 (651 aa).

The interval 51-83 is disordered; it reads QGSGSEEEEAAGTEGDAQEWPGAGSSADQDDEE.

Belongs to the Mediator complex subunit 17 family. Interacts with GATA1 and PPARG. Component of the Mediator complex, which is composed of MED1, MED4, MED6, MED7, MED8, MED9, MED10, MED11, MED12, MED13, MED13L, MED14, MED15, MED16, MED17, MED18, MED19, MED20, MED21, MED22, MED23, MED24, MED25, MED26, MED27, MED29, MED30, MED31, CCNC, CDK8 and CDC2L6/CDK11. The MED12, MED13, CCNC and CDK8 subunits form a distinct module termed the CDK8 module. Mediator containing the CDK8 module is less active than Mediator lacking this module in supporting transcriptional activation. Individual preparations of the Mediator complex lacking one or more distinct subunits have been variously termed ARC, CRSP, DRIP, PC2, SMCC and TRAP. Interacts with STAT2. As to expression, ubiquitous.

The protein resides in the nucleus. Its function is as follows. Component of the Mediator complex, a coactivator involved in the regulated transcription of nearly all RNA polymerase II-dependent genes. Mediator functions as a bridge to convey information from gene-specific regulatory proteins to the basal RNA polymerase II transcription machinery. Mediator is recruited to promoters by direct interactions with regulatory proteins and serves as a scaffold for the assembly of a functional preinitiation complex with RNA polymerase II and the general transcription factors. The chain is Mediator of RNA polymerase II transcription subunit 17 (MED17) from Homo sapiens (Human).